Here is a 542-residue protein sequence, read N- to C-terminus: Chaperonin GroEL 2 (542 aa).

ATP-binding positions include 29 to 32, 86 to 90, G413, 477 to 479, and D493; these read TLGP, DGTTT, and NAA.

Belongs to the chaperonin (HSP60) family. As to quaternary structure, forms a cylinder of 14 subunits composed of two heptameric rings stacked back-to-back. Interacts with the co-chaperonin GroES.

It localises to the cytoplasm. It catalyses the reaction ATP + H2O + a folded polypeptide = ADP + phosphate + an unfolded polypeptide.. Functionally, together with its co-chaperonin GroES, plays an essential role in assisting protein folding. The GroEL-GroES system forms a nano-cage that allows encapsulation of the non-native substrate proteins and provides a physical environment optimized to promote and accelerate protein folding. In Frankia alni (strain DSM 45986 / CECT 9034 / ACN14a), this protein is Chaperonin GroEL 2.